We begin with the raw amino-acid sequence, 146 residues long: Large ribosomal subunit protein bL17 (146 aa).

The segment covering 124–134 (EASRATRAAAS) has biased composition (low complexity). Positions 124-146 (EASRATRAAASKKAEEEAASEAE) are disordered.

This sequence belongs to the bacterial ribosomal protein bL17 family. Part of the 50S ribosomal subunit. Contacts protein L32.

The polypeptide is Large ribosomal subunit protein bL17 (Corynebacterium kroppenstedtii (strain DSM 44385 / JCM 11950 / CIP 105744 / CCUG 35717)).